The sequence spans 343 residues: UDP-3-O-acylglucosamine N-acyltransferase (343 aa).

Catalysis depends on His-239, which acts as the Proton acceptor.

This sequence belongs to the transferase hexapeptide repeat family. LpxD subfamily. Homotrimer.

The enzyme catalyses a UDP-3-O-[(3R)-3-hydroxyacyl]-alpha-D-glucosamine + a (3R)-hydroxyacyl-[ACP] = a UDP-2-N,3-O-bis[(3R)-3-hydroxyacyl]-alpha-D-glucosamine + holo-[ACP] + H(+). Its pathway is bacterial outer membrane biogenesis; LPS lipid A biosynthesis. In terms of biological role, catalyzes the N-acylation of UDP-3-O-acylglucosamine using 3-hydroxyacyl-ACP as the acyl donor. Is involved in the biosynthesis of lipid A, a phosphorylated glycolipid that anchors the lipopolysaccharide to the outer membrane of the cell. This chain is UDP-3-O-acylglucosamine N-acyltransferase, found in Vibrio vulnificus (strain YJ016).